The primary structure comprises 296 residues: 4-hydroxy-tetrahydrodipicolinate synthase (296 aa).

Thr-49 provides a ligand contact to pyruvate. Tyr-137 acts as the Proton donor/acceptor in catalysis. Lys-166 serves as the catalytic Schiff-base intermediate with substrate. A pyruvate-binding site is contributed by Val-208.

The protein belongs to the DapA family. As to quaternary structure, homotetramer; dimer of dimers.

The protein localises to the cytoplasm. The catalysed reaction is L-aspartate 4-semialdehyde + pyruvate = (2S,4S)-4-hydroxy-2,3,4,5-tetrahydrodipicolinate + H2O + H(+). It functions in the pathway amino-acid biosynthesis; L-lysine biosynthesis via DAP pathway; (S)-tetrahydrodipicolinate from L-aspartate: step 3/4. Catalyzes the condensation of (S)-aspartate-beta-semialdehyde [(S)-ASA] and pyruvate to 4-hydroxy-tetrahydrodipicolinate (HTPA). This is 4-hydroxy-tetrahydrodipicolinate synthase from Desulforamulus reducens (strain ATCC BAA-1160 / DSM 100696 / MI-1) (Desulfotomaculum reducens).